The primary structure comprises 215 residues: CASP-like protein 1E1 (215 aa).

Topologically, residues 1–51 (MESSRGKPGLNGSGGGAAAFDYSSRRGYYTGAGAALPPLAAGSRAPPVDPC) are cytoplasmic. The helical transmembrane segment at 52 to 72 (CVALRVFVLLGTLASAVVMAA) threads the bilayer. Residues 73–103 (DRQSTTVQIAAGEQLAPPLRVPVTAKWTYSS) lie on the Extracellular side of the membrane. The helical transmembrane segment at 104–124 (AFVYFVVANAMVFAFSAAALA) threads the bilayer. The Cytoplasmic segment spans residues 125–130 (AVRRRS). The chain crosses the membrane as a helical span at residues 131-151 (AVVPVMVGDLVAMALLFSAVG). Residues 152 to 185 (AAAQFGLLGERGNAHVRWAKVCDVYGPFCERAMA) lie on the Extracellular side of the membrane. The helical transmembrane segment at 186–206 (AVVVALIAAFADLVLLMLTIL) threads the bilayer. Topologically, residues 207 to 215 (TIHKASSYY) are cytoplasmic.

Belongs to the Casparian strip membrane proteins (CASP) family. In terms of assembly, homodimer and heterodimers.

The protein resides in the cell membrane. The chain is CASP-like protein 1E1 from Oryza sativa subsp. indica (Rice).